A 468-amino-acid chain; its full sequence is Tapasin-related protein (468 aa).

The signal sequence occupies residues 1–18 (MGTQEGWCLLLCLALSGA). Residues 19–405 (AETKPHPAER…STQVVPPERR (387 aa)) lie on the Lumenal side of the membrane. Positions 181–297 (PQGTVRTAVE…SLYRAQQIIQ (117 aa)) constitute an Ig-like V-type domain. Cystine bridges form between C212–C283 and C321–C382. Residue N265 is glycosylated (N-linked (GlcNAc...) asparagine). One can recognise an Ig-like C1-type domain in the interval 304 to 394 (PKVRLSLANE…MHISLEEPLG (91 aa)). A helical membrane pass occupies residues 406-426 (TALGVIFASSLFLLALLFLGL). Residues 427–468 (QRRQAPTRVGLLQAERWKTTSCADTQSSHLHEDRTACVSQPS) are Cytoplasmic-facing.

Interacts with peptide-free HLA-A*02-B2M complexes or those loaded with low affinity peptides, likely facilitating peptide exchange onto higher affinity peptides. Interacts with MR1 in a ligand-independent way; this interaction may stabilize MR1 pool and facilitate ligand loading and dissociation.

The protein localises to the cell membrane. It localises to the endoplasmic reticulum membrane. Its subcellular location is the microsome membrane. The protein resides in the golgi apparatus membrane. Its function is as follows. Component of the antigen processing and presentation pathway, which binds to MHC class I coupled with beta2-microglobulin/B2M. Association between TAPBPR and MHC class I occurs in the absence of a functional peptide-loading complex (PLC). Expression seems to slow down and down-regulate MHC class I surface expression. This Pongo abelii (Sumatran orangutan) protein is Tapasin-related protein (TAPBPL).